The chain runs to 92 residues: Small ribosomal subunit protein uS19c (92 aa).

Belongs to the universal ribosomal protein uS19 family.

Its subcellular location is the plastid. It is found in the chloroplast. In terms of biological role, protein S19 forms a complex with S13 that binds strongly to the 16S ribosomal RNA. The protein is Small ribosomal subunit protein uS19c of Oedogonium cardiacum (Filamentous green alga).